The following is a 517-amino-acid chain: 6-phosphogluconate dehydrogenase, decarboxylating (517 aa).

Residues 35-40 (GLAVMG), 58-60 (NRT), 100-102 (VKA), and asparagine 128 each bind NADP(+). Residues asparagine 128 and 154–156 (SGG) contribute to the substrate site. Lysine 208 acts as the Proton acceptor in catalysis. Substrate is bound at residue 211–212 (HN). The active-site Proton donor is the glutamate 215. Tyrosine 216, lysine 286, arginine 313, arginine 474, and histidine 480 together coordinate substrate.

Belongs to the 6-phosphogluconate dehydrogenase family. As to quaternary structure, homodimer.

The enzyme catalyses 6-phospho-D-gluconate + NADP(+) = D-ribulose 5-phosphate + CO2 + NADPH. Its pathway is carbohydrate degradation; pentose phosphate pathway; D-ribulose 5-phosphate from D-glucose 6-phosphate (oxidative stage): step 3/3. Functionally, catalyzes the oxidative decarboxylation of 6-phosphogluconate to ribulose 5-phosphate and CO(2), with concomitant reduction of NADP to NADPH. The polypeptide is 6-phosphogluconate dehydrogenase, decarboxylating (DOR14) (Candida albicans (Yeast)).